We begin with the raw amino-acid sequence, 296 residues long: 4-hydroxy-tetrahydrodipicolinate synthase (296 aa).

A pyruvate-binding site is contributed by threonine 50. Catalysis depends on tyrosine 138, which acts as the Proton donor/acceptor. Lysine 166 serves as the catalytic Schiff-base intermediate with substrate. Residue isoleucine 208 participates in pyruvate binding.

The protein belongs to the DapA family. In terms of assembly, homotetramer; dimer of dimers.

The protein localises to the cytoplasm. The catalysed reaction is L-aspartate 4-semialdehyde + pyruvate = (2S,4S)-4-hydroxy-2,3,4,5-tetrahydrodipicolinate + H2O + H(+). The protein operates within amino-acid biosynthesis; L-lysine biosynthesis via DAP pathway; (S)-tetrahydrodipicolinate from L-aspartate: step 3/4. Catalyzes the condensation of (S)-aspartate-beta-semialdehyde [(S)-ASA] and pyruvate to 4-hydroxy-tetrahydrodipicolinate (HTPA). The chain is 4-hydroxy-tetrahydrodipicolinate synthase from Ruthia magnifica subsp. Calyptogena magnifica.